Consider the following 677-residue polypeptide: Testis-specific Y-encoded-like protein 2 (677 aa).

The interval 1–54 is disordered; the sequence is MDRPDEGPPAKTPRLSSSEPRQRDLPPPPPPPLQRLPLPPPQQRPRPQEETEAA. A Glycyl lysine isopeptide (Lys-Gly) (interchain with G-Cter in SUMO2) cross-link involves residue K11. S18 bears the Phosphoserine mark. A compositionally biased stretch (pro residues) spans 25-44; that stretch reads LPPPPPPPLQRLPLPPPQQR. Glycyl lysine isopeptide (Lys-Gly) (interchain with G-Cter in SUMO2) cross-links involve residues K158 and K160. The interval 175-202 is disordered; that stretch reads KESVRRRQRRRRRRRKQRKAKESRERSA. A compositionally biased stretch (basic residues) spans 178-193; it reads VRRRQRRRRRRRKQRK. T333 is subject to Phosphothreonine. The disordered stretch occupies residues 469 to 658; sequence ANENLCDSEN…EVNSEDSDIQ (190 aa). Polar residues predominate over residues 484 to 493; it reads GYNTKITDNK. Positions 509–525 are enriched in basic and acidic residues; the sequence is EKNTYDSEDSNSEKADG. A compositionally biased stretch (polar residues) spans 526-540; sequence DNTTLRDNQQVTNIQ. Acidic residues-rich tracts occupy residues 543 to 581 and 606 to 627; these read SDSD…DDDD and DYEE…ETSE. Residues 639–650 show a composition bias toward basic and acidic residues; sequence DERIYGEERSEV. 3 positions are modified to phosphoserine: S648, S652, and S655.

It belongs to the nucleosome assembly protein (NAP) family. As to quaternary structure, interacts with histones. Interacts with CASK. Part of a complex containing CASK, TBR1 and TSPYL2. Post-translationally, phosphorylation at Thr-333 impairs function on cell proliferation. In terms of tissue distribution, present at high levels in the pituitary gland and at moderate levels in adrenal gland, brain, testis and ovary. In brain, expressed both in mature neurons and progenitor cells (at protein level).

It is found in the nucleus. Its subcellular location is the cytoplasm. Part of the CASK/TBR1/TSPYL2 transcriptional complex which modulates gene expression in response to neuronal synaptic activity, probably by facilitating nucleosome assembly. May inhibit cell proliferation by inducing p53-dependent CDKN1A expression. The sequence is that of Testis-specific Y-encoded-like protein 2 (Tspyl2) from Mus musculus (Mouse).